Reading from the N-terminus, the 122-residue chain is Large ribosomal subunit protein uL14 (122 aa).

This sequence belongs to the universal ribosomal protein uL14 family. In terms of assembly, part of the 50S ribosomal subunit. Forms a cluster with proteins L3 and L19. In the 70S ribosome, L14 and L19 interact and together make contacts with the 16S rRNA in bridges B5 and B8.

In terms of biological role, binds to 23S rRNA. Forms part of two intersubunit bridges in the 70S ribosome. The sequence is that of Large ribosomal subunit protein uL14 from Ectopseudomonas mendocina (strain ymp) (Pseudomonas mendocina).